We begin with the raw amino-acid sequence, 680 residues long: Pescadillo homolog (680 aa).

The disordered stretch occupies residues 310–330; that stretch reads LDQAKDEQTAETTEESSDTID. One can recognise a BRCT domain in the interval 351 to 470; sequence QAGSLFAPFT…KLVRPDLYSP (120 aa). Residues 472–680 form a disordered region; the sequence is ATLPPHLSPW…RRKLEKGAAK (209 aa). Positions 496–523 form a coiled coil; it reads AEQEEEGEAEMAEDSDEEMEEAADEKSK. Over residues 497–518 the composition is skewed to acidic residues; it reads EQEEEGEAEMAEDSDEEMEEAA. The span at 519–529 shows a compositional bias: basic and acidic residues; it reads DEKSKTASKDE. Acidic residues-rich tracts occupy residues 530–543 and 551–585; these read AESESEEDDDDESV and GTDDDESESESEEEDEDFGGFEDDEAASESEDEEE. Residues 586–596 show a composition bias toward basic and acidic residues; the sequence is VARTQHQKELE. Residues 613 to 680 are a coiled coil; it reads ASKKKASQAK…RRKLEKGAAK (68 aa). Positions 616–628 are enriched in basic residues; it reads KKASQAKKIAAKK. The segment covering 629-639 has biased composition (basic and acidic residues); sequence RKEEEEIERQK.

The protein belongs to the pescadillo family. As to quaternary structure, component of the NOP7 complex, composed of erb1, nop7 and ytm1. The complex is held together by erb1, which interacts with nop7 via its N-terminal domain and with ytm1 via a high-affinity interaction between the seven-bladed beta-propeller domains of the 2 proteins. The NOP7 complex associates with the 66S pre-ribosome.

The protein resides in the nucleus. It localises to the nucleolus. It is found in the nucleoplasm. In terms of biological role, component of the NOP7 complex, which is required for maturation of the 25S and 5.8S ribosomal RNAs and formation of the 60S ribosome. This Aspergillus clavatus (strain ATCC 1007 / CBS 513.65 / DSM 816 / NCTC 3887 / NRRL 1 / QM 1276 / 107) protein is Pescadillo homolog (nop7).